The sequence spans 610 residues: Threonine--tRNA ligase (610 aa).

The segment at 1-29 (MANHDQQTVSSAAATTSASPSPVVLPKTS) is disordered. The segment covering 8-24 (TVSSAAATTSASPSPVV) has biased composition (low complexity). The interval 209–502 (DHRRIGKDLD…MTENYAGDYP (294 aa)) is catalytic. Zn(2+)-binding residues include Cys302, His353, and His479.

It belongs to the class-II aminoacyl-tRNA synthetase family. As to quaternary structure, homodimer. Requires Zn(2+) as cofactor.

It localises to the cytoplasm. The enzyme catalyses tRNA(Thr) + L-threonine + ATP = L-threonyl-tRNA(Thr) + AMP + diphosphate + H(+). Catalyzes the attachment of threonine to tRNA(Thr) in a two-step reaction: L-threonine is first activated by ATP to form Thr-AMP and then transferred to the acceptor end of tRNA(Thr). Also edits incorrectly charged L-seryl-tRNA(Thr). This chain is Threonine--tRNA ligase, found in Synechococcus sp. (strain WH7803).